Here is a 149-residue protein sequence, read N- to C-terminus: MGLEKSLILFPLFFLLLGWVQPSLGRESAAQKFQRQHMDPDGSSINSPTYCNQMMKRRDMTNGSCKPVNTFVHEPLADVQAVCSQENVTCKNRKSNCYKSSSALHITDCHLKGNSKYPNCDYKTTQYQKHIIVACEGNPYVPVHFDATV.

Residues 1–25 (MGLEKSLILFPLFFLLLGWVQPSLG) form the signal peptide. 2 residues coordinate substrate: Lys32 and Arg35. His37 acts as the Proton acceptor in catalysis. 4 disulfides stabilise this stretch: Cys51-Cys109, Cys65-Cys120, Cys83-Cys135, and Cys90-Cys97. Substrate contacts are provided by residues 66–70 (KPVNT) and Lys91. His144 functions as the Proton donor in the catalytic mechanism.

It belongs to the pancreatic ribonuclease family. Monomer. Interacts with and forms tight 1:1 complexes with RNH1. Dimerization of two such complexes may occur. Interaction with RNH1 inhibits this protein. Pancreas.

The protein resides in the secreted. The catalysed reaction is an [RNA] containing cytidine + H2O = an [RNA]-3'-cytidine-3'-phosphate + a 5'-hydroxy-ribonucleotide-3'-[RNA].. The enzyme catalyses an [RNA] containing uridine + H2O = an [RNA]-3'-uridine-3'-phosphate + a 5'-hydroxy-ribonucleotide-3'-[RNA].. Functionally, endonuclease that catalyzes the cleavage of RNA on the 3' side of pyrimidine nucleotides. Acts on single-stranded and double-stranded RNA. In Mus musculus (Mouse), this protein is Ribonuclease pancreatic (Rnase1).